The sequence spans 773 residues: Phenylalanine--tRNA ligase beta subunit (773 aa).

The 112-residue stretch at 39 to 150 (LKAPDKVVVG…GKLELGRPLN (112 aa)) folds into the tRNA-binding domain. The B5 domain occupies 391–467 (KELPIIPISI…RIIGIDNIAS (77 aa)). Residues Asp445, Asp451, Glu454, and Glu455 each coordinate Mg(2+). The FDX-ACB domain occupies 682-773 (SKFPAITRDL…TLKNLGLDLR (92 aa)).

This sequence belongs to the phenylalanyl-tRNA synthetase beta subunit family. Type 1 subfamily. As to quaternary structure, tetramer of two alpha and two beta subunits. Mg(2+) serves as cofactor.

It is found in the cytoplasm. It carries out the reaction tRNA(Phe) + L-phenylalanine + ATP = L-phenylalanyl-tRNA(Phe) + AMP + diphosphate + H(+). The chain is Phenylalanine--tRNA ligase beta subunit (pheT) from Campylobacter jejuni subsp. jejuni serotype O:2 (strain ATCC 700819 / NCTC 11168).